A 344-amino-acid polypeptide reads, in one-letter code: Methionine import ATP-binding protein MetN (344 aa).

The region spanning Ile2–Ile241 is the ABC transporter domain. Gly38 to Ser45 is an ATP binding site.

The protein belongs to the ABC transporter superfamily. Methionine importer (TC 3.A.1.24) family. In terms of assembly, the complex is composed of two ATP-binding proteins (MetN), two transmembrane proteins (MetI) and a solute-binding protein (MetQ).

Its subcellular location is the cell inner membrane. It carries out the reaction L-methionine(out) + ATP + H2O = L-methionine(in) + ADP + phosphate + H(+). The enzyme catalyses D-methionine(out) + ATP + H2O = D-methionine(in) + ADP + phosphate + H(+). Functionally, part of the ABC transporter complex MetNIQ involved in methionine import. Responsible for energy coupling to the transport system. In Cupriavidus necator (strain ATCC 17699 / DSM 428 / KCTC 22496 / NCIMB 10442 / H16 / Stanier 337) (Ralstonia eutropha), this protein is Methionine import ATP-binding protein MetN.